A 249-amino-acid chain; its full sequence is uncharacterized protein (249 aa).

Positions 1–36 are cleaved as a signal peptide; it reads MAKSPARRCTAKVRRVLSRSVLILCWSLLGAAPAHA. The disordered stretch occupies residues 227-249; that stretch reads ARQPPGRWVCPSSAGGPIGWHRQ.

This is an uncharacterized protein from Mycobacterium tuberculosis (strain CDC 1551 / Oshkosh).